Here is a 432-residue protein sequence, read N- to C-terminus: Glutamyl-tRNA reductase (432 aa).

Residues 49–52 (TCNR), Ser-107, 112–114 (ETQ), and Gln-118 contribute to the substrate site. The active-site Nucleophile is the Cys-50. Position 186–191 (186–191 (GAGEMG)) interacts with NADP(+).

Belongs to the glutamyl-tRNA reductase family. As to quaternary structure, homodimer.

The catalysed reaction is (S)-4-amino-5-oxopentanoate + tRNA(Glu) + NADP(+) = L-glutamyl-tRNA(Glu) + NADPH + H(+). The protein operates within porphyrin-containing compound metabolism; protoporphyrin-IX biosynthesis; 5-aminolevulinate from L-glutamyl-tRNA(Glu): step 1/2. Catalyzes the NADPH-dependent reduction of glutamyl-tRNA(Glu) to glutamate 1-semialdehyde (GSA). The polypeptide is Glutamyl-tRNA reductase (Campylobacter jejuni (strain RM1221)).